The following is a 188-amino-acid chain: Interferon alpha-2 (188 aa).

The N-terminal stretch at 1-23 is a signal peptide; that stretch reads MALTFALLVALLVLSCKSSCSVG. Intrachain disulfides connect C24–C121 and C52–C161. The O-linked (GalNAc...) threonine glycan is linked to T129.

Belongs to the alpha/beta interferon family. In terms of assembly, interacts with IFNAR2.

It is found in the secreted. Produced by macrophages, IFN-alpha have antiviral activities. The polypeptide is Interferon alpha-2 (IFNA2) (Homo sapiens (Human)).